The following is an 83-amino-acid chain: Apolipoprotein C-I (83 aa).

Positions 1 to 26 are cleaved as a signal peptide; sequence MRLILSLPVLAVVLAMVLEGPAPAQA.

The protein belongs to the apolipoprotein C1 family.

Its subcellular location is the secreted. Inhibitor of lipoprotein binding to the low density lipoprotein (LDL) receptor, LDL receptor-related protein, and very low density lipoprotein (VLDL) receptor. Associates with high density lipoproteins (HDL) and the triacylglycerol-rich lipoproteins in the plasma and makes up about 10% of the protein of the VLDL and 2% of that of HDL. Appears to interfere directly with fatty acid uptake and is also the major plasma inhibitor of cholesteryl ester transfer protein (CETP). Binds free fatty acids and reduces their intracellular esterification. Modulates the interaction of APOE with beta-migrating VLDL and inhibits binding of beta-VLDL to the LDL receptor-related protein. In Eonycteris spelaea (Lesser dawn bat), this protein is Apolipoprotein C-I (APOC1).